The chain runs to 1369 residues: MutS protein homolog 5 (1369 aa).

Residues 138-190 form a disordered region; it reads IYEDGTTEEGTSEDTVPTWDSSLAYSTDETTAEKEEKEEDEDDDDEGLPAKLN. Acidic residues predominate over residues 173 to 184; it reads EKEEDEDDDDEG. An ATP-binding site is contributed by 639 to 646; sequence GPNACGKS. 4 disordered regions span residues 880 to 915, 935 to 1135, 1153 to 1182, and 1248 to 1278; these read SMRNVSEEIEKERSEASTPASKSRSTITARSNSVLS, KKKK…RSSN, LKSQDTYDPNVTPRSSSRRELRPDVSHSQN, and NFIFKTPEPRSSEKQRSLLKNKGQASNSSIS. Residues 884–894 are compositionally biased toward basic and acidic residues; sequence VSEEIEKERSE. Polar residues-rich tracts occupy residues 895–915 and 941–950; these read ASTPASKSRSTITARSNSVLS and TGSSMESSMS. Residues 954–967 are compositionally biased toward acidic residues; it reads FQEEDEGTEGEEDQ. Residues 991–1003 show a composition bias toward polar residues; sequence QSINSRHSFSTRT. Residues 1024-1037 are compositionally biased toward low complexity; that stretch reads STSTSSPGPSASKS. Polar residues predominate over residues 1049–1065; it reads VKESQVLETPKQLSISS. The segment covering 1073 to 1084 has biased composition (basic and acidic residues); the sequence is SSEKDVISRVSE. Polar residues-rich tracts occupy residues 1111–1124 and 1153–1167; these read KNRSMNQSLIQSAR and LKSQDTYDPNVTPRS. The segment covering 1254–1263 has biased composition (basic and acidic residues); it reads PEPRSSEKQR.

It belongs to the DNA mismatch repair MutS family. Heterooligomer of him-14 and msh-5. Interacts with the brc-1-brd-1 heterodimer. Expressed in the germline.

The protein localises to the chromosome. Crucial component in meiotic recombination, functioning at some point after the initiation step of recombination. Plays a role in promoting the crossover outcome of meiotic recombination events. Required for formation of normal meiotic crossover, and crossover and chiasmata generated by artificially made DNA breaks. Together with him-14 and zhp-3 plays a role in the activation of DNA damage-dependent apoptosis at the DNA damage checkpoint in pachytene cells. The polypeptide is MutS protein homolog 5 (Caenorhabditis elegans).